Reading from the N-terminus, the 550-residue chain is Formate--tetrahydrofolate ligase (550 aa).

60–67 (TPFGEGKT) is a binding site for ATP.

This sequence belongs to the formate--tetrahydrofolate ligase family.

The catalysed reaction is (6S)-5,6,7,8-tetrahydrofolate + formate + ATP = (6R)-10-formyltetrahydrofolate + ADP + phosphate. It functions in the pathway one-carbon metabolism; tetrahydrofolate interconversion. In Campylobacter curvus (strain 525.92), this protein is Formate--tetrahydrofolate ligase.